The chain runs to 235 residues: Pyridoxine 5'-phosphate synthase (235 aa).

Asparagine 6 contacts 3-amino-2-oxopropyl phosphate. 8-9 contributes to the 1-deoxy-D-xylulose 5-phosphate binding site; that stretch reads DH. A 3-amino-2-oxopropyl phosphate-binding site is contributed by arginine 17. The active-site Proton acceptor is the histidine 42. 1-deoxy-D-xylulose 5-phosphate contacts are provided by arginine 44 and histidine 49. Catalysis depends on glutamate 69, which acts as the Proton acceptor. Threonine 99 is a binding site for 1-deoxy-D-xylulose 5-phosphate. The active-site Proton donor is histidine 189. 3-amino-2-oxopropyl phosphate-binding positions include glycine 190 and 211–212; that span reads GH.

The protein belongs to the PNP synthase family. In terms of assembly, homooctamer; tetramer of dimers.

The protein resides in the cytoplasm. The catalysed reaction is 3-amino-2-oxopropyl phosphate + 1-deoxy-D-xylulose 5-phosphate = pyridoxine 5'-phosphate + phosphate + 2 H2O + H(+). It participates in cofactor biosynthesis; pyridoxine 5'-phosphate biosynthesis; pyridoxine 5'-phosphate from D-erythrose 4-phosphate: step 5/5. Functionally, catalyzes the complicated ring closure reaction between the two acyclic compounds 1-deoxy-D-xylulose-5-phosphate (DXP) and 3-amino-2-oxopropyl phosphate (1-amino-acetone-3-phosphate or AAP) to form pyridoxine 5'-phosphate (PNP) and inorganic phosphate. This is Pyridoxine 5'-phosphate synthase from Chlorobium luteolum (strain DSM 273 / BCRC 81028 / 2530) (Pelodictyon luteolum).